We begin with the raw amino-acid sequence, 396 residues long: Large ribosomal subunit protein uL4A (396 aa).

Residues 352–373 show a composition bias toward basic and acidic residues; it reads KAKEKKPDDGKPKAKKPLDAKT. The segment at 352–374 is disordered; sequence KAKEKKPDDGKPKAKKPLDAKTK.

This sequence belongs to the universal ribosomal protein uL4 family. As to quaternary structure, component of the large ribosomal subunit.

Its subcellular location is the cytoplasm. Its function is as follows. Component of the large ribosomal subunit. The ribosome is a large ribonucleoprotein complex responsible for the synthesis of proteins in the cell. This chain is Large ribosomal subunit protein uL4A (rpl4-a), found in Xenopus laevis (African clawed frog).